A 3574-amino-acid chain; its full sequence is Chromatin structure-remodeling complex protein SYD (3574 aa).

Disordered regions lie at residues 76–105 (SCLP…GVSN), 123–211 (TSGR…KIDD), and 328–372 (DPKG…TERS). Polar residues-rich tracts occupy residues 124–148 (SGRQ…QSNR) and 155–168 (PSNL…SQPH). Positions 169-181 (NRSETMNQRDVKS) are enriched in basic and acidic residues. Residues 194 to 204 (WDQNMDNSQIF) are compositionally biased toward polar residues. Residues 358–372 (RLDEMDFSSKETERS) are compositionally biased toward basic and acidic residues. Positions 573 to 647 (QKMKEERQRR…QREKINLLKI (75 aa)) constitute an HSA domain. In terms of domain architecture, Helicase ATP-binding spans 766 to 933 (VSLYNNHLNG…WALLNFLLPN (168 aa)). 779–786 (DEMGLGKT) lines the ATP pocket. A DEAH box motif is present at residues 884–887 (DEGH). The 147-residue stretch at 1077–1223 (MLDRMLPKLK…KLGVANQSIT (147 aa)) folds into the Helicase C-terminal domain. The Nuclear localization signal motif lies at 1266–1273 (ARRESEID). Disordered regions lie at residues 1342 to 1472 (KRKD…VSRT), 1500 to 1575 (HPTS…SDAE), 1588 to 1637 (IVSR…SGSH), 1690 to 1811 (GPVQ…QIEV), 1830 to 1868 (QPHF…QTAD), 2040 to 2068 (SSLS…LEKN), 2089 to 2115 (SSEE…TDEV), 2143 to 2162 (SSML…HSSI), 2179 to 2220 (LDDK…QMED), 2235 to 2338 (EEKE…DTND), 2350 to 2451 (EEKE…HMED), 2517 to 2538 (FESE…EVSE), 2684 to 2703 (SEEI…QPDD), 2718 to 2759 (IDIG…RDSR), 2865 to 2884 (DTEK…LHQL), 3017 to 3045 (EGTD…PSSS), 3189 to 3208 (NADS…VVEK), 3316 to 3337 (VDDS…AEPM), and 3512 to 3574 (TEDT…NEDV). Basic and acidic residues predominate over residues 1362-1371 (AREVRSYEEK). Composition is skewed to polar residues over residues 1399–1426 (SLAN…QAIT) and 1500–1511 (HPTSSLALTSPD). Positions 1532-1546 (GRGRGRSRGRGAGRG) are enriched in basic residues. Composition is skewed to polar residues over residues 1555–1571 (GSNS…TSLA) and 1597–1614 (EGST…SATT). Residues 1617–1627 (RSDKAADKDLD) show a composition bias toward basic and acidic residues. Polar residues-rich tracts occupy residues 1690–1699 (GPVQNQNAVS), 1706–1752 (KSPS…STVE), 1796–1806 (DASSARSTGLT), 1832–1849 (HFSQ…SLSQ), 2040–2057 (SSLS…STTA), and 2090–2110 (SEEQ…LQAS). Over residues 2248–2260 (DDADTEQDPEESV) the composition is skewed to acidic residues. The segment covering 2438 to 2451 (DRPKDGTADTHMED) has biased composition (basic and acidic residues). The segment covering 2718-2735 (IDIGITSGKTCQPSSSTQ) has biased composition (polar residues). 2 stretches are compositionally biased toward polar residues: residues 3034–3045 (KSQLADTEPSSS) and 3191–3204 (DSQL…SSPS). Positions 3523 to 3538 (KTEEKDAENPSDRLDG) are enriched in basic and acidic residues.

It belongs to the SNF2/RAD54 helicase family. In terms of assembly, interacts with LFY. Binds to BARD1/ROW1. Phosphorylated. Mostly expressed in rapidly dividing cells in the vegetative, inflorescence, and root meristems, as well as in young leaf and flower primordia. Isoform 1 is predominantly found in seedlings whereas isoform 2 is present in both seedlings and inflorescences (at protein level).

Its subcellular location is the cytoplasm. It localises to the nucleus. In terms of biological role, catalytic component of the chromatin structure-remodeling complex (RSC), which is involved in transcription regulation and nucleosome positioning. Controls stem cell fate via the transcription regulation of WUS in the shoot apical meristem, by modulating its promoter. LFY-dependent repressor of the meristem identity switch from vegetative to reproductive development probably by modulating chromatin state. Involved in the regulation of floral homeotic gene expression in response to environmental stimuli. Required for carpel and ovule development, and for cotyledon separation via the regulation of CUC2 transcription. Regulates the promoters of several genes downstream of the jasmonate (JA) and ethylene (ET) signaling pathways. Required for resistance against the necrotrophic pathogen B.cinerea but not the biotrophic pathogen P.syringae. The protein is Chromatin structure-remodeling complex protein SYD (SYD) of Arabidopsis thaliana (Mouse-ear cress).